Here is a 38-residue protein sequence, read N- to C-terminus: Photosystem II reaction center protein L (38 aa).

Residues 17-37 (SLYWGLLLIFVLAVLFSNYFF) form a helical membrane-spanning segment.

The protein belongs to the PsbL family. In terms of assembly, PSII is composed of 1 copy each of membrane proteins PsbA, PsbB, PsbC, PsbD, PsbE, PsbF, PsbH, PsbI, PsbJ, PsbK, PsbL, PsbM, PsbT, PsbX, PsbY, PsbZ, Psb30/Ycf12, at least 3 peripheral proteins of the oxygen-evolving complex and a large number of cofactors. It forms dimeric complexes.

Its subcellular location is the plastid. It is found in the chloroplast thylakoid membrane. In terms of biological role, one of the components of the core complex of photosystem II (PSII). PSII is a light-driven water:plastoquinone oxidoreductase that uses light energy to abstract electrons from H(2)O, generating O(2) and a proton gradient subsequently used for ATP formation. It consists of a core antenna complex that captures photons, and an electron transfer chain that converts photonic excitation into a charge separation. This subunit is found at the monomer-monomer interface and is required for correct PSII assembly and/or dimerization. This Oenothera argillicola (Appalachian evening primrose) protein is Photosystem II reaction center protein L.